Here is a 501-residue protein sequence, read N- to C-terminus: Suppressor of hairless protein homolog (501 aa).

DNA-binding regions lie at residues 58-68 (QKSYGNEKRFF), 166-171 (SKPSKK), and 193-198 (RLRSQT). Residues 356–446 (PVVESLQLNG…YSTSLTFTYT (91 aa)) enclose the IPT/TIG domain.

The protein belongs to the Su(H) family. Interacts with activated Notch proteins. Forms a ternary complex with nrarp and the intracellular domain (NICD) of notch1. Interacts with rita1, leading to nuclear export, prevent the interaction between rbpj and NICD product and subsequent down-regulation of the Notch signaling pathway.

It is found in the nucleus. The protein resides in the cytoplasm. Transcriptional regulator that plays a central role in Notch signaling, a signaling pathway involved in cell-cell communication that regulates a broad spectrum of cell-fate determinations. Acts as a transcriptional repressor when it is not associated with Notch proteins. When associated with some NICD product of Notch proteins (Notch intracellular domain), it acts as a transcriptional activator that activates transcription of Notch target genes. Required for the transcriptional activation of ESR1, suggesting that it is required during primary neurogenesis in embryos. Binds to the oxygen responsive element of COX4I2 and activates its transcription under hypoxia conditions (4% oxygen). This chain is Suppressor of hairless protein homolog (rbpj), found in Xenopus laevis (African clawed frog).